Reading from the N-terminus, the 211-residue chain is Large ribosomal subunit protein bL25 (211 aa).

A compositionally biased stretch (basic and acidic residues) spans 1-18; that stretch reads MAKTHEIKAERRADEGKG. Positions 1-20 are disordered; it reads MAKTHEIKAERRADEGKGAS.

This sequence belongs to the bacterial ribosomal protein bL25 family. CTC subfamily. In terms of assembly, part of the 50S ribosomal subunit; part of the 5S rRNA/L5/L18/L25 subcomplex. Contacts the 5S rRNA. Binds to the 5S rRNA independently of L5 and L18.

This is one of the proteins that binds to the 5S RNA in the ribosome where it forms part of the central protuberance. The sequence is that of Large ribosomal subunit protein bL25 from Xanthomonas oryzae pv. oryzae (strain MAFF 311018).